We begin with the raw amino-acid sequence, 244 residues long: MSDEEEVTYEEEEEEYVEEEEEEVVAPEPPKPAPPPAAPPPLIRRRSSANYRSYATEPQVKRKPKISASRKLQLNTMMLQIAKAEMEREEEERAREKERYLAEHCQPLQLSGLSRSELQDLCQELHARIDVVDEERYDMEAKVNKNITELEDLNQKIFDLRGKFKKPNLRRVRLSADAMMMALLGTKHKVSMDLRANLKQVKQTKKDDADKDIREVGDWRKNVDALSGMEGRKKKFESTGAAAV.

A compositionally biased stretch (acidic residues) spans 1–25 (MSDEEEVTYEEEEEEYVEEEEEEVV). The disordered stretch occupies residues 1 to 67 (MSDEEEVTYE…PQVKRKPKIS (67 aa)). Serine 2 is subject to N-acetylserine. Serine 2 is subject to Phosphoserine; by CK2. The segment covering 27 to 42 (PEPPKPAPPPAAPPPL) has biased composition (pro residues).

This sequence belongs to the troponin I family. As to quaternary structure, binds to actin and tropomyosin. As to expression, heart.

In terms of biological role, troponin I is the inhibitory subunit of troponin, the thin filament regulatory complex which confers calcium-sensitivity to striated muscle actomyosin ATPase activity. The sequence is that of Troponin I, cardiac muscle (tnni3) from Xenopus laevis (African clawed frog).